Reading from the N-terminus, the 217-residue chain is 3-dehydroquinate dehydratase (217 aa).

Residues E26–R28 and R59 each bind 3-dehydroquinate. H114 functions as the Proton donor/acceptor in the catalytic mechanism. K140 functions as the Schiff-base intermediate with substrate in the catalytic mechanism. The 3-dehydroquinate site is built by R178 and Q201.

This sequence belongs to the type-I 3-dehydroquinase family. In terms of assembly, homodimer.

It catalyses the reaction 3-dehydroquinate = 3-dehydroshikimate + H2O. It functions in the pathway metabolic intermediate biosynthesis; chorismate biosynthesis; chorismate from D-erythrose 4-phosphate and phosphoenolpyruvate: step 3/7. Its function is as follows. Involved in the third step of the chorismate pathway, which leads to the biosynthesis of aromatic amino acids. Catalyzes the cis-dehydration of 3-dehydroquinate (DHQ) and introduces the first double bond of the aromatic ring to yield 3-dehydroshikimate. The protein is 3-dehydroquinate dehydratase of Hydrogenobaculum sp. (strain Y04AAS1).